Here is a 127-residue protein sequence, read N- to C-terminus: Ribosome-binding factor A (127 aa).

Belongs to the RbfA family. As to quaternary structure, monomer. Binds 30S ribosomal subunits, but not 50S ribosomal subunits or 70S ribosomes.

Its subcellular location is the cytoplasm. Its function is as follows. One of several proteins that assist in the late maturation steps of the functional core of the 30S ribosomal subunit. Associates with free 30S ribosomal subunits (but not with 30S subunits that are part of 70S ribosomes or polysomes). Required for efficient processing of 16S rRNA. May interact with the 5'-terminal helix region of 16S rRNA. The polypeptide is Ribosome-binding factor A (Stenotrophomonas maltophilia (strain R551-3)).